The sequence spans 34 residues: Cytochrome b6-f complex subunit 7 (34 aa).

Residues 9-27 (AILSFGLIFVGWGLGALLL) traverse the membrane as a helical segment.

This sequence belongs to the PetM family. As to quaternary structure, the 4 large subunits of the cytochrome b6-f complex are cytochrome b6, subunit IV (17 kDa polypeptide, PetD), cytochrome f and the Rieske protein, while the 4 small subunits are PetG, PetL, PetM and PetN. The complex functions as a dimer.

The protein resides in the cellular thylakoid membrane. In terms of biological role, component of the cytochrome b6-f complex, which mediates electron transfer between photosystem II (PSII) and photosystem I (PSI), cyclic electron flow around PSI, and state transitions. The sequence is that of Cytochrome b6-f complex subunit 7 from Nostoc punctiforme (strain ATCC 29133 / PCC 73102).